Here is a 216-residue protein sequence, read N- to C-terminus: ATP phosphoribosyltransferase (216 aa).

This sequence belongs to the ATP phosphoribosyltransferase family. Short subfamily. Heteromultimer composed of HisG and HisZ subunits.

The protein localises to the cytoplasm. The enzyme catalyses 1-(5-phospho-beta-D-ribosyl)-ATP + diphosphate = 5-phospho-alpha-D-ribose 1-diphosphate + ATP. The protein operates within amino-acid biosynthesis; L-histidine biosynthesis; L-histidine from 5-phospho-alpha-D-ribose 1-diphosphate: step 1/9. In terms of biological role, catalyzes the condensation of ATP and 5-phosphoribose 1-diphosphate to form N'-(5'-phosphoribosyl)-ATP (PR-ATP). Has a crucial role in the pathway because the rate of histidine biosynthesis seems to be controlled primarily by regulation of HisG enzymatic activity. The chain is ATP phosphoribosyltransferase from Nitrosomonas eutropha (strain DSM 101675 / C91 / Nm57).